A 287-amino-acid polypeptide reads, in one-letter code: Hydroxysteroid 11-beta-dehydrogenase 1-like protein (287 aa).

Residues 1-22 (MKLYAKLLLCSICVAFIAVRWS) form the signal peptide. Residues 40–66 (GAST…TARR), 91–92 (DM), and 118–120 (NHI) each bind NADP(+). Serine 169 provides a ligand contact to substrate. Residue tyrosine 182 is the Proton acceptor of the active site. NADP(+) contacts are provided by residues 182-186 (YASTK) and 215-221 (GLIDTDS).

It belongs to the short-chain dehydrogenases/reductases (SDR) family.

It is found in the secreted. The enzyme catalyses cortisone + NADPH + H(+) = cortisol + NADP(+). Functionally, unidirectional NADP(+)-dependent cortisol dehydrogenase (in vitro). This Danio rerio (Zebrafish) protein is Hydroxysteroid 11-beta-dehydrogenase 1-like protein (hsd11b1l).